The following is a 441-amino-acid chain: Nucleolar and spindle-associated protein 1 (441 aa).

2 disordered regions span residues 47–186 and 216–267; these read ARKG…PNFK and MNEL…LGLK. Composition is skewed to polar residues over residues 56–74 and 100–116; these read ESQTSASSCDETEIQISNQ and DSQQNHSEIKISNPTEF. Residues 117–126 are compositionally biased toward basic and acidic residues; that stretch reads QNHEKQESQD. Ser124 bears the Phosphoserine; by ATM mark. Ser135 carries the post-translational modification Phosphoserine. Residues 152 to 171 show a composition bias toward basic and acidic residues; the sequence is RDSKVPSEGKKSLYTDESSK. Phosphothreonine is present on Thr182. An interaction with microtubules region spans residues 237-382; that stretch reads GRLSVASTPI…HKGKLKPWGQ (146 aa). A Phosphoserine modification is found at Ser240. The span at 241–264 shows a compositional bias: polar residues; sequence VASTPISQRRSQGRSCGPASQSTL. Phosphothreonine is present on Thr244. Residues Ser247, Ser255, Ser269, Ser276, and Ser311 each carry the phosphoserine modification. The interval 286-319 is disordered; it reads AATKDNEHKRSLTKTPARKSAHVTVSGGTPKGEA. A phosphothreonine mark is found at Thr314, Thr338, and Thr349. Ser352 and Ser363 each carry phosphoserine. The short motif at 384 to 390 is the KEN box element; the sequence is KENNYLN. The disordered stretch occupies residues 401–427; the sequence is KTYKQPHLQTKEEQRKKREQERKEKKA. A coiled-coil region spans residues 407–432; it reads HLQTKEEQRKKREQERKEKKAKVLGM. Residues 409-424 show a composition bias toward basic and acidic residues; it reads QTKEEQRKKREQERKE. Residue Lys411 is modified to N6-acetyllysine.

This sequence belongs to the NUSAP family. As to quaternary structure, interacts with DNA and microtubules. Microtubule bundling is inhibited by IPO7, KPNA2 and KPNB1 while association with DNA is also inhibited by IPO7 and KPNA2. Post-translationally, ubiquitinated. Ubiquitination by FZR1 may lead to proteasome-dependent degradation of this protein. In terms of processing, phosphorylation by ATM in G2/M-phase induces mitotic arrest.

It is found in the cytoplasm. The protein localises to the nucleus. The protein resides in the nucleolus. Its subcellular location is the cytoskeleton. It localises to the spindle. It is found in the chromosome. Its function is as follows. Microtubule-associated protein with the capacity to bundle and stabilize microtubules. May associate with chromosomes and promote the organization of mitotic spindle microtubules around them. This chain is Nucleolar and spindle-associated protein 1 (NUSAP1), found in Homo sapiens (Human).